Reading from the N-terminus, the 93-residue chain is Large ribosomal subunit protein bL31B (93 aa).

This sequence belongs to the bacterial ribosomal protein bL31 family. Type B subfamily. Part of the 50S ribosomal subunit.

This Psychrobacter cryohalolentis (strain ATCC BAA-1226 / DSM 17306 / VKM B-2378 / K5) protein is Large ribosomal subunit protein bL31B.